We begin with the raw amino-acid sequence, 252 residues long: Phosphoglycolate phosphatase (252 aa).

Asp13 functions as the Nucleophile in the catalytic mechanism. 3 residues coordinate Mg(2+): Asp13, Asp15, and Asp192.

This sequence belongs to the HAD-like hydrolase superfamily. CbbY/CbbZ/Gph/YieH family. Monomer. Mg(2+) serves as cofactor. The cofactor is chloride.

It catalyses the reaction 2-phosphoglycolate + H2O = glycolate + phosphate. The protein operates within organic acid metabolism; glycolate biosynthesis; glycolate from 2-phosphoglycolate: step 1/1. Its function is as follows. Specifically catalyzes the dephosphorylation of 2-phosphoglycolate. Is involved in the dissimilation of the intracellular 2-phosphoglycolate formed during the DNA repair of 3'-phosphoglycolate ends, a major class of DNA lesions induced by oxidative stress. The polypeptide is Phosphoglycolate phosphatase (Shigella sonnei (strain Ss046)).